A 319-amino-acid chain; its full sequence is D-alanine--D-alanine ligase (319 aa).

The ATP-grasp domain maps to K120 to E315. D147 to L198 is an ATP binding site. Mg(2+) is bound by residues D270, E282, and N284.

Belongs to the D-alanine--D-alanine ligase family. It depends on Mg(2+) as a cofactor. Mn(2+) serves as cofactor.

The protein resides in the cytoplasm. It catalyses the reaction 2 D-alanine + ATP = D-alanyl-D-alanine + ADP + phosphate + H(+). The protein operates within cell wall biogenesis; peptidoglycan biosynthesis. In terms of biological role, cell wall formation. The sequence is that of D-alanine--D-alanine ligase from Thermus thermophilus (strain ATCC 27634 / DSM 579 / HB8).